The primary structure comprises 302 residues: Ventral anterior homeobox 2a (302 aa).

5 disordered regions span residues 1–35 (MFDQATSMGDGVSEERSPLCGKSATSCSERVRDKG), 50–73 (KDIPVTSTSSPGSSKEEVQDSQST), 156–175 (RRTKQKKDQSRDSEKRSSST), 199–223 (PPNLISSSQNNMGTSSGNGTNLGTS), and 282–302 (AFEPYTRLDRKDTASSKKSTS). The segment at residues 105-164 (PKRTRTSFTAEQLYRLELEFQRCQYVVGRERTELARQLNLSETQVKVWFQNRRTKQKKDQ) is a DNA-binding region (homeobox). Residues 161-172 (KKDQSRDSEKRS) are compositionally biased toward basic and acidic residues. A compositionally biased stretch (low complexity) spans 204–223 (SSSQNNMGTSSGNGTNLGTS). Basic and acidic residues predominate over residues 287–296 (TRLDRKDTAS).

Belongs to the EMX homeobox family.

It is found in the nucleus. Transcription factor that may function in dorsoventral specification of the forebrain. Regulates the expression of Wnt signaling antagonists including the expression of a truncated tcf7l2 isoform that cannot bind ctnnb1 and acts therefore as a potent dominant-negative Wnt antagonist. Plays a crucial role in eye development and, in particular, in the specification of the ventral optic vesicle. May be a regulator of axial polarization in the retina. This is Ventral anterior homeobox 2a (vax2-a) from Xenopus laevis (African clawed frog).